Reading from the N-terminus, the 397-residue chain is MAKAKFERTKPHVNIGTIGHIDHGKTTLTAAITRVLHDKFPELNKASAFDQIDKAPEERQRGITISIAHVEYQTEARHYAHVDCPGHADYIKNMITGAAQMDGAILVVAATDGPMPQTKEHVILARQVGVPYIVVALNKADMVEDEELLELVEMEVRELLSSYEFPGDDVPVVRVSALKALEGDAEWGDKLMELMDAVDTAIPEPERAIDQPFLMPIEDVFTITGRGTVVTGRIERGVLNVNQEVEVVGIKPTSTKTTVTSIEMFNKMLDTGQAGDNAALLLRGLKRDDVERGQVVVKPGSITPHTEFEGQAYILSKDEGGRHTPFYNNYRPQFYFRTTDVTGVVSLPEGTEMVMPGDNTEMKVDLIQPIAMEEGLKFAIREGGRTVGAGRVVKILK.

In terms of domain architecture, tr-type G spans 10 to 206; that stretch reads KPHVNIGTIG…AVDTAIPEPE (197 aa). Residues 19–26 form a G1 region; the sequence is GHIDHGKT. GTP is bound at residue 19–26; the sequence is GHIDHGKT. Residue Thr-26 coordinates Mg(2+). The interval 62 to 66 is G2; sequence GITIS. The segment at 83-86 is G3; the sequence is DCPG. Residues 83–87 and 138–141 each bind GTP; these read DCPGH and NKAD. A G4 region spans residues 138–141; that stretch reads NKAD. Residues 176 to 178 are G5; sequence SAL.

The protein belongs to the TRAFAC class translation factor GTPase superfamily. Classic translation factor GTPase family. EF-Tu/EF-1A subfamily. As to quaternary structure, monomer.

The protein resides in the cytoplasm. It carries out the reaction GTP + H2O = GDP + phosphate + H(+). GTP hydrolase that promotes the GTP-dependent binding of aminoacyl-tRNA to the A-site of ribosomes during protein biosynthesis. The sequence is that of Elongation factor Tu from Kineococcus radiotolerans (strain ATCC BAA-149 / DSM 14245 / SRS30216).